A 91-amino-acid chain; its full sequence is MKLSCLSLALAIILILAIVHSPNMEVKALADPEADAFGEANAFGEADAFAEANADVKGMKKAIKEILDCVIEKGYDKLAAKLKKVIQQLWE.

The N-terminal stretch at 1–21 is a signal peptide; that stretch reads MKLSCLSLALAIILILAIVHS. The propeptide occupies 22–54; it reads PNMEVKALADPEADAFGEANAFGEADAFAEANA.

Homodimer; disulfide-linked. In terms of tissue distribution, expressed by the venom gland and reservoir.

It is found in the secreted. Functionally, causes a significant and dose-dependent histamine release, probably by influencing the signal transduction of mast cells through a non-IgE-mediated pathway. This peptide does not have cytotoxic activities. The protein is M-myrmeciitoxin-Mb3a of Myrmecia banksi (Jack jumper ant).